Reading from the N-terminus, the 356-residue chain is Galectin-9C (356 aa).

Residues Phe-17–Gln-148 form the Galectin 1 domain. Trp-82–Lys-88 is a binding site for a beta-D-galactoside. A disordered region spans residues Phe-170–Ala-190. The 129-residue stretch at Phe-228–Thr-356 folds into the Galectin 2 domain. Trp-288–Ser-294 lines the a beta-D-galactoside pocket.

Binds galactosides. The polypeptide is Galectin-9C (LGALS9C) (Homo sapiens (Human)).